The following is a 589-amino-acid chain: 2-succinyl-5-enolpyruvyl-6-hydroxy-3-cyclohexene-1-carboxylate synthase (589 aa).

Residues aspartate 198–proline 222 form a disordered region.

The protein belongs to the TPP enzyme family. MenD subfamily. In terms of assembly, homodimer. The cofactor is Mg(2+). It depends on Mn(2+) as a cofactor. Thiamine diphosphate is required as a cofactor.

The catalysed reaction is isochorismate + 2-oxoglutarate + H(+) = 5-enolpyruvoyl-6-hydroxy-2-succinyl-cyclohex-3-ene-1-carboxylate + CO2. It functions in the pathway quinol/quinone metabolism; 1,4-dihydroxy-2-naphthoate biosynthesis; 1,4-dihydroxy-2-naphthoate from chorismate: step 2/7. The protein operates within quinol/quinone metabolism; menaquinone biosynthesis. Catalyzes the thiamine diphosphate-dependent decarboxylation of 2-oxoglutarate and the subsequent addition of the resulting succinic semialdehyde-thiamine pyrophosphate anion to isochorismate to yield 2-succinyl-5-enolpyruvyl-6-hydroxy-3-cyclohexene-1-carboxylate (SEPHCHC). The chain is 2-succinyl-5-enolpyruvyl-6-hydroxy-3-cyclohexene-1-carboxylate synthase from Corynebacterium jeikeium (strain K411).